Consider the following 670-residue polypeptide: DNA ligase (670 aa).

NAD(+)-binding positions include 32 to 36 (DAEYD), 81 to 82 (SL), and Glu110. The active-site N6-AMP-lysine intermediate is the Lys112. Residues Arg133, Glu170, Lys289, and Lys313 each coordinate NAD(+). Residues Cys407, Cys410, Cys425, and Cys431 each contribute to the Zn(2+) site. Positions 590–670 (ESQLSLKGQT…ALMDLLNAAN (81 aa)) constitute a BRCT domain.

Belongs to the NAD-dependent DNA ligase family. LigA subfamily. Requires Mg(2+) as cofactor. The cofactor is Mn(2+).

It catalyses the reaction NAD(+) + (deoxyribonucleotide)n-3'-hydroxyl + 5'-phospho-(deoxyribonucleotide)m = (deoxyribonucleotide)n+m + AMP + beta-nicotinamide D-nucleotide.. Its function is as follows. DNA ligase that catalyzes the formation of phosphodiester linkages between 5'-phosphoryl and 3'-hydroxyl groups in double-stranded DNA using NAD as a coenzyme and as the energy source for the reaction. It is essential for DNA replication and repair of damaged DNA. In Shewanella frigidimarina (strain NCIMB 400), this protein is DNA ligase.